The following is a 247-amino-acid chain: Sensory rhodopsin-1 (247 aa).

Residues 1–4 (MTGA) lie on the Extracellular side of the membrane. Residues 5-26 (VSAAYWIAAVAFLVGLGITAAL) form a helical membrane-spanning segment. The Cytoplasmic portion of the chain corresponds to 27–35 (YAKLGESED). A helical membrane pass occupies residues 36-57 (RGRLAALAVIPGFAGLAYAGMA). Residues 58 to 71 (LGIGTVTVNGAELV) lie on the Extracellular side of the membrane. Residues 72–93 (GLRYVDWIVTTPLLVGFIGYVA) traverse the membrane as a helical segment. Over 94-96 (GAS) the chain is Cytoplasmic. Residues 97-119 (RRAIAGVMLADALMIAFGAGAVV) traverse the membrane as a helical segment. At 120 to 123 (TGGT) the chain is on the extracellular side. Residues 124-151 (LKWVLFGVSSIFHVTLFAYLYVVFPRAV) form a helical membrane-spanning segment. Topologically, residues 152-154 (PDD) are cytoplasmic. The helical transmembrane segment at 155-182 (PMQRGLFSLLKNHVGLLWLAYPFVWLMG) threads the bilayer. The Extracellular segment spans residues 183–190 (PAGIGFTT). Residues 191–223 (GVGAALTYAFLDVLAKVPYVYFFYARRQAFTDV) form a helical membrane-spanning segment. An N6-(retinylidene)lysine modification is found at Lys-206. Topologically, residues 224–247 (VSAATADREDATDAVGDGAPTAAD) are cytoplasmic.

It belongs to the archaeal/bacterial/fungal opsin family. As to quaternary structure, interacts with HTR-I.

Its subcellular location is the cell membrane. Involved in the control of phototaxis. Mediates both photoattractant (in the orange light) and photophobic (in the near UV light) responses. The signal is then transmitted to the sensory rhodopsin I transducer (HTR-I). The sequence is that of Sensory rhodopsin-1 (sop1) from Halobacterium sp. (strain SG1).